The sequence spans 196 residues: Putative NADH dehydrogenase/NAD(P)H nitroreductase Reut_A1586 (196 aa).

Belongs to the nitroreductase family. HadB/RutE subfamily. FMN is required as a cofactor.

This is Putative NADH dehydrogenase/NAD(P)H nitroreductase Reut_A1586 from Cupriavidus pinatubonensis (strain JMP 134 / LMG 1197) (Cupriavidus necator (strain JMP 134)).